The following is a 193-amino-acid chain: ATP-dependent Clp protease proteolytic subunit (193 aa).

The active-site Nucleophile is serine 98. Histidine 123 is an active-site residue.

Belongs to the peptidase S14 family. Fourteen ClpP subunits assemble into 2 heptameric rings which stack back to back to give a disk-like structure with a central cavity, resembling the structure of eukaryotic proteasomes.

It is found in the cytoplasm. The catalysed reaction is Hydrolysis of proteins to small peptides in the presence of ATP and magnesium. alpha-casein is the usual test substrate. In the absence of ATP, only oligopeptides shorter than five residues are hydrolyzed (such as succinyl-Leu-Tyr-|-NHMec, and Leu-Tyr-Leu-|-Tyr-Trp, in which cleavage of the -Tyr-|-Leu- and -Tyr-|-Trp bonds also occurs).. Cleaves peptides in various proteins in a process that requires ATP hydrolysis. Has a chymotrypsin-like activity. Plays a major role in the degradation of misfolded proteins. This Histophilus somni (strain 2336) (Haemophilus somnus) protein is ATP-dependent Clp protease proteolytic subunit.